A 361-amino-acid polypeptide reads, in one-letter code: Protein RecA (361 aa).

77-84 contributes to the ATP binding site; that stretch reads GPESSGKT.

Belongs to the RecA family.

The protein resides in the cytoplasm. In terms of biological role, can catalyze the hydrolysis of ATP in the presence of single-stranded DNA, the ATP-dependent uptake of single-stranded DNA by duplex DNA, and the ATP-dependent hybridization of homologous single-stranded DNAs. It interacts with LexA causing its activation and leading to its autocatalytic cleavage. The polypeptide is Protein RecA (Rhizobium rhizogenes (strain K84 / ATCC BAA-868) (Agrobacterium radiobacter)).